A 253-amino-acid chain; its full sequence is uncharacterized protein (253 aa).

The chain crosses the membrane as a helical span at residues 62–78 (WCSIGWSIGALIIFLVY). The span at 141-158 (TTPQTTTPEIPSSTEPQE) shows a compositional bias: low complexity. The tract at residues 141–225 (TTPQTTTPEI…HDNQPLEERH (85 aa)) is disordered. Residues 200-216 (NVEDEPPPNKPEEEEDH) show a composition bias toward acidic residues.

Its subcellular location is the host membrane. This is an uncharacterized protein from Aedes vexans (Inland floodwater mosquito).